The chain runs to 305 residues: tRNA dimethylallyltransferase (305 aa).

Position 8-15 (8-15 (GPTASGKT)) interacts with ATP. 10–15 (TASGKT) lines the substrate pocket. The interaction with substrate tRNA stretch occupies residues 33-36 (DSQQ).

Belongs to the IPP transferase family. Monomer. Requires Mg(2+) as cofactor.

The catalysed reaction is adenosine(37) in tRNA + dimethylallyl diphosphate = N(6)-dimethylallyladenosine(37) in tRNA + diphosphate. Its function is as follows. Catalyzes the transfer of a dimethylallyl group onto the adenine at position 37 in tRNAs that read codons beginning with uridine, leading to the formation of N6-(dimethylallyl)adenosine (i(6)A). The polypeptide is tRNA dimethylallyltransferase (Anaeromyxobacter dehalogenans (strain 2CP-1 / ATCC BAA-258)).